Reading from the N-terminus, the 343-residue chain is Ribosomal RNA small subunit methyltransferase C (343 aa).

This sequence belongs to the methyltransferase superfamily. RsmC family. As to quaternary structure, monomer.

The protein localises to the cytoplasm. It catalyses the reaction guanosine(1207) in 16S rRNA + S-adenosyl-L-methionine = N(2)-methylguanosine(1207) in 16S rRNA + S-adenosyl-L-homocysteine + H(+). Specifically methylates the guanine in position 1207 of 16S rRNA in the 30S particle. This Escherichia fergusonii (strain ATCC 35469 / DSM 13698 / CCUG 18766 / IAM 14443 / JCM 21226 / LMG 7866 / NBRC 102419 / NCTC 12128 / CDC 0568-73) protein is Ribosomal RNA small subunit methyltransferase C.